A 220-amino-acid chain; its full sequence is NADH-quinone oxidoreductase subunit I (220 aa).

4Fe-4S ferredoxin-type domains lie at 71–102 and 112–141; these read LQRL…IITH and DSYT…MGNR. [4Fe-4S] cluster-binding residues include Cys-82, Cys-85, Cys-88, Cys-92, Cys-121, Cys-124, Cys-127, and Cys-131. The tract at residues 187–220 is disordered; it reads MQATPLDYVQEPSKEESQEETPTNPESNKGDENV.

This sequence belongs to the complex I 23 kDa subunit family. NDH-1 is composed of 14 different subunits. Subunits NuoA, H, J, K, L, M, N constitute the membrane sector of the complex. The cofactor is [4Fe-4S] cluster.

Its subcellular location is the cell inner membrane. It carries out the reaction a quinone + NADH + 5 H(+)(in) = a quinol + NAD(+) + 4 H(+)(out). Functionally, NDH-1 shuttles electrons from NADH, via FMN and iron-sulfur (Fe-S) centers, to quinones in the respiratory chain. The immediate electron acceptor for the enzyme in this species is believed to be ubiquinone. Couples the redox reaction to proton translocation (for every two electrons transferred, four hydrogen ions are translocated across the cytoplasmic membrane), and thus conserves the redox energy in a proton gradient. In Helicobacter pylori (strain ATCC 700392 / 26695) (Campylobacter pylori), this protein is NADH-quinone oxidoreductase subunit I.